A 106-amino-acid polypeptide reads, in one-letter code: Transcriptional and immune response regulator (106 aa).

Monomer. Interacts with NOTCH2 (via ANK repeats), the interaction inhibits the nuclear translocation of NOTCH2 N2ICD. Interacts (C-terminus) with CBY1 (C-terminus), TCIM competes with CTNNB1 for the interaction with CBY1. As to expression, expressed in liver, expression levels decrease in regenerating liver. In bone marrow, expressed in large progenitor-like cells, cells with ring-shaped nuclei and, at lower, levels in hematopietic stem cell-like cells with round nuclei (at protein level).

Its subcellular location is the cytoplasm. It is found in the nucleus. The protein resides in the nucleolus. It localises to the nucleus speckle. In terms of biological role, seems to be involved in the regulation of cell growth an differentiation, may play different and opposite roles depending on the tissue or cell type. May enhance the WNT-CTNNB1 pathway by relieving antagonistic activity of CBY1. Enhances the proliferation of follicular dendritic cells. Plays a role in the mitogen-activated MAPK2/3 signaling pathway, positively regulates G1-to-S-phase transition of the cell cycle. In endothelial cells, enhances key inflammatory mediators and inflammatory response through the modulation of NF-kappaB transcriptional regulatory activity. Involved in the regulation of heat shock response, seems to play a positive feedback with HSF1 to modulate heat-shock downstream gene expression. Plays a role in the regulation of hematopoiesis even if the mechanisms are unknown. In cancers such as thyroid or lung cancer, it has been described as promoter of cell proliferation, G1-to-S-phase transition and inhibitor of apoptosis. However, it negatively regulates self-renewal of liver cancer cells via suppresion of NOTCH2 signaling. The chain is Transcriptional and immune response regulator from Mus musculus (Mouse).